Consider the following 433-residue polypeptide: Arrestin domain-containing protein 1 (433 aa).

2 disordered regions span residues 296 to 322 (GLGL…AEAA) and 349 to 372 (LSSV…PLHP). The span at 301–312 (PGAPPLVVPSAP) shows a compositional bias: pro residues. 2 short sequence motifs (PPxY motif) span residues 402-405 (PPEY) and 415-418 (PPSY).

This sequence belongs to the arrestin family. In terms of assembly, interacts (via PPxY motifs) with ITCH (via WW domains); the interaction is direct and participates in the recruitment of the ubiquitin-protein ligase ITCH to the NOTCH1 receptor. Interacts with ARRB1 and ARRB2; the interaction is direct. Interacts with TSG101; may recruit TSG101 to the plasma membrane. Interacts (via PPxY motifs) with WWP2 (via WW domains); ubiquitinates ARRDC1. Interacts with SLC11A2; controls the incorporation of SLC11A2 into extracellular vesicles through an ubiquitination-dependent mechanism. Interacts with WWP1 (via WW domains). Interacts with NEDD4 (via WW domains). Interacts with PDCD6IP. Post-translationally, ubiquitinated. Ubiquitination by WWP2; promotes localization to extracellular microvesicles. Ubiquitinated by WWP1.

It localises to the cell membrane. Functionally, functions as an adapter recruiting ubiquitin-protein ligases to their specific substrates. Through an ubiquitination-dependent mechanism plays for instance a role in the incorporation of SLC11A2 into extracellular vesicles. More generally, plays a role in the extracellular transport of proteins between cells through the release in the extracellular space of microvesicles. By participating in the ITCH-mediated ubiquitination and subsequent degradation of NOTCH1, negatively regulates the NOTCH signaling pathway. This is Arrestin domain-containing protein 1 from Homo sapiens (Human).